The sequence spans 258 residues: MLNGKTALVTGSTSGIGLGIAKALAAQGANIIVNGFGDADAAKAEIAQAGQGIRVGYHGADMSKAAEIEDMMRYAQSDFGGADILVNNAGIQHVAAIEDFPPERWDAIIAINLTSAFHTTRLALPGMKQKDWGRIINVASTHGLVASAQKSAYVAAKHGIVGFTKVTALETAQTGVTANAICPGWVLTPLVQKQVEARAQKEGIPVEQAKRELVLEKQPSGQFVTPDELGALAVFLSSEAARQVRGAIWNMDGGWVAQ.

An NAD(+)-binding site is contributed by L8–I32. S140 contacts substrate. The Proton acceptor role is filled by Y153.

This sequence belongs to the short-chain dehydrogenases/reductases (SDR) family.

It catalyses the reaction (R)-3-hydroxybutanoate + NAD(+) = acetoacetate + NADH + H(+). This chain is D-beta-hydroxybutyrate dehydrogenase (hbdH1), found in Cupriavidus necator (strain ATCC 17699 / DSM 428 / KCTC 22496 / NCIMB 10442 / H16 / Stanier 337) (Ralstonia eutropha).